The following is a 577-amino-acid chain: Zinc finger protein 384 (577 aa).

The interval 171–225 (TLTEEGGGGGGGGGSVAPKPPRGRKKKRMLESGLPEMNDPYVLSPEDDDDHQKDG) is disordered. The span at 175 to 185 (EGGGGGGGGGS) shows a compositional bias: gly residues. S214 is modified (phosphoserine). C2H2-type zinc fingers lie at residues 228 to 250 (YRCR…SKSH), 256 to 278 (HKCP…IRIH), 284 to 306 (YSCN…TRIH), 317 to 339 (HKCP…LRIH), 345 to 367 (YNCS…TRIH), 373 to 397 (YKCA…RRQH), 403 to 425 (FKCH…LSTH), and 433 to 455 (YTCT…MRKH). Low complexity predominate over residues 501-515 (QQQQQQQQQQQQQQQ). Positions 501 to 550 (QQQQQQQQQQQQQQQQPPPHFQSPGAAPQGGGGGDSNPNPPPQCSFDLTP) are disordered.

Belongs to the krueppel C2H2-type zinc-finger protein family. In terms of assembly, interacts with BCAR1.

The protein resides in the nucleus. Transcription factor that binds the consensus DNA sequence [GC]AAAAA. Seems to bind and regulate the promoters of MMP1, MMP3, MMP7 and COL1A1. The sequence is that of Zinc finger protein 384 (ZNF384) from Homo sapiens (Human).